Reading from the N-terminus, the 252-residue chain is Methylthioribulose-1-phosphate dehydratase (252 aa).

Cys105 contributes to the substrate binding site. 2 residues coordinate Zn(2+): His123 and His125. Glu151 acts as the Proton donor/acceptor in catalysis. A Zn(2+)-binding site is contributed by His208.

It belongs to the aldolase class II family. MtnB subfamily. It depends on Zn(2+) as a cofactor.

The protein resides in the cytoplasm. It catalyses the reaction 5-(methylsulfanyl)-D-ribulose 1-phosphate = 5-methylsulfanyl-2,3-dioxopentyl phosphate + H2O. It functions in the pathway amino-acid biosynthesis; L-methionine biosynthesis via salvage pathway; L-methionine from S-methyl-5-thio-alpha-D-ribose 1-phosphate: step 2/6. In terms of biological role, catalyzes the dehydration of methylthioribulose-1-phosphate (MTRu-1-P) into 2,3-diketo-5-methylthiopentyl-1-phosphate (DK-MTP-1-P). This Sclerotinia sclerotiorum (strain ATCC 18683 / 1980 / Ss-1) (White mold) protein is Methylthioribulose-1-phosphate dehydratase.